Reading from the N-terminus, the 68-residue chain is MSELNTKTSPATNQAAGQEEKGKAGNVKKAEEEEEIDIDLTAPETEKAALAIQGKFRRFQKRKKDPSS.

The segment covering 1–16 (MSELNTKTSPATNQAA) has biased composition (polar residues). A disordered region spans residues 1 to 45 (MSELNTKTSPATNQAAGQEEKGKAGNVKKAEEEEEIDIDLTAPET). T8 is subject to Phosphothreonine. Residues 18-31 (QEEKGKAGNVKKAE) are compositionally biased toward basic and acidic residues. The IQ domain occupies 45-68 (TEKAALAIQGKFRRFQKRKKDPSS).

The protein belongs to the PCP4 family.

The polypeptide is Purkinje cell protein 4-like protein 1 (PCP4L1) (Homo sapiens (Human)).